A 76-amino-acid polypeptide reads, in one-letter code: Putative protein StbC (76 aa).

This is Putative protein StbC (stbC) from Escherichia coli.